Consider the following 2409-residue polypeptide: Reducing polyketide synthase FUB1 (2409 aa).

The segment covering 1-43 (MTLSNGSNGANGTSNGHGAHPSANGFHNAANGGANNGTPNGGA) has biased composition (low complexity). Residues 1–49 (MTLSNGSNGANGTSNGHGAHPSANGFHNAANGGANNGTPNGGAEYNASL) are disordered. Positions 57-479 (SSAIAVIGVS…GANAHAVLDD (423 aa)) constitute a Ketosynthase family 3 (KS3) domain. Catalysis depends on for beta-ketoacyl synthase activity residues C230, H365, and H403. Residues 608 to 929 (TFIFTGQGAQ…FSAIKRKQDA (322 aa)) form a malonyl-CoA:ACP transacylase (MAT) domain region. S699 acts as the For malonyltransferase activity in catalysis. Positions 994-1127 (LELLGVRDPR…GLVSTSYKRE (134 aa)) are N-terminal hotdog fold. In terms of domain architecture, PKS/mFAS DH spans 994–1307 (LELLGVRDPR…TVPLRGASDP (314 aa)). A dehydratase (DH) domain region spans residues 995 to 1302 (ELLGVRDPRS…LEGCKTVPLR (308 aa)). H1026 acts as the Proton acceptor; for dehydratase activity in catalysis. Residues 1155–1307 (LPSVDPTVFY…TVPLRGASDP (153 aa)) form a C-terminal hotdog fold region. D1220 (proton donor; for dehydratase activity) is an active-site residue. The enoyl reductase (ER) domain stretch occupies residues 1713-2025 (GLLDTLEYLS…SGGHVGKIVL (313 aa)). Residues 2049–2225 (ATYVLIGGLG…AATSINLSLV (177 aa)) form a ketoreductase (KR) domain region. The Carrier domain maps to 2328 to 2405 (EVYEIVLQQL…GFAKKVMAKS (78 aa)). S2365 carries the O-(pantetheine 4'-phosphoryl)serine modification.

It functions in the pathway mycotoxin biosynthesis. Reducing polyketide synthase; part of the gene cluster that mediates the biosynthesis of fusaric acid, a mycotoxin with low to moderate toxicity to animals and humans, but with high phytotoxic properties. L-aspartate is suggested as fusaric acid amino acid precursor that is activated and further processed to O-acetyl-L-homoserine by cluster enzymes aspartate kinase FUB3 and homoserine O-acetyltransferase FUB5, as well as enzymes of the primary metabolism. The polyketide synthase (PKS) FUB1 generates the triketide trans-2-hexenal which is presumptively released by the hydrolase FUB4 and linked to the NRPS-bound amino acid precursor by NAD(P)-dependent dehydrogenase FUB6. FUB1, FUB4, and the non-canonical NRPS Fub8 may form an enzyme complex. Further processing of the NRPS-bound intermediate might be carried out by FUB6 and the sulfhydrylase FUB7, enabling a spontaneous electrocyclization to close the carbon backbone of fusaric acid. Dihydrofusaric acid is likely to be released via reduction by the thioester reductase (TR) domain of FUB8 whereupon the final oxidation to fusaric acid may (also) be performed by the FMN-dependent dehydrogenase FUB9. This Gibberella moniliformis (strain M3125 / FGSC 7600) (Maize ear and stalk rot fungus) protein is Reducing polyketide synthase FUB1.